Consider the following 227-residue polypeptide: Cytochrome c oxidase subunit 2 (227 aa).

An N-formylmethionine modification is found at Met1. Residues 1–14 (MAYPMQLGFQDATS) are Mitochondrial intermembrane-facing. The chain crosses the membrane as a helical span at residues 15 to 45 (PIMEELLHFHDHTLMIVFLISSLVLYIISLM). Over 46–59 (LTTKLTHTSTMDAQ) the chain is Mitochondrial matrix. The chain crosses the membrane as a helical span at residues 60–87 (EVETIWTILPAIILILIALPSLRILYMM). Topologically, residues 88-227 (DEINNPSLTV…YFEKWSASML (140 aa)) are mitochondrial intermembrane. Cu cation-binding residues include His161, Cys196, Glu198, Cys200, His204, and Met207. Position 198 (Glu198) interacts with Mg(2+). Residue Tyr218 is modified to Phosphotyrosine.

This sequence belongs to the cytochrome c oxidase subunit 2 family. Component of the cytochrome c oxidase (complex IV, CIV), a multisubunit enzyme composed of 14 subunits. The complex is composed of a catalytic core of 3 subunits MT-CO1, MT-CO2 and MT-CO3, encoded in the mitochondrial DNA, and 11 supernumerary subunits COX4I, COX5A, COX5B, COX6A, COX6B, COX6C, COX7A, COX7B, COX7C, COX8 and NDUFA4, which are encoded in the nuclear genome. The complex exists as a monomer or a dimer and forms supercomplexes (SCs) in the inner mitochondrial membrane with NADH-ubiquinone oxidoreductase (complex I, CI) and ubiquinol-cytochrome c oxidoreductase (cytochrome b-c1 complex, complex III, CIII), resulting in different assemblies (supercomplex SCI(1)III(2)IV(1) and megacomplex MCI(2)III(2)IV(2)). Found in a complex with TMEM177, COA6, COX18, COX20, SCO1 and SCO2. Interacts with TMEM177 in a COX20-dependent manner. Interacts with COX20. Interacts with COX16. Requires Cu cation as cofactor.

It is found in the mitochondrion inner membrane. The catalysed reaction is 4 Fe(II)-[cytochrome c] + O2 + 8 H(+)(in) = 4 Fe(III)-[cytochrome c] + 2 H2O + 4 H(+)(out). Its function is as follows. Component of the cytochrome c oxidase, the last enzyme in the mitochondrial electron transport chain which drives oxidative phosphorylation. The respiratory chain contains 3 multisubunit complexes succinate dehydrogenase (complex II, CII), ubiquinol-cytochrome c oxidoreductase (cytochrome b-c1 complex, complex III, CIII) and cytochrome c oxidase (complex IV, CIV), that cooperate to transfer electrons derived from NADH and succinate to molecular oxygen, creating an electrochemical gradient over the inner membrane that drives transmembrane transport and the ATP synthase. Cytochrome c oxidase is the component of the respiratory chain that catalyzes the reduction of oxygen to water. Electrons originating from reduced cytochrome c in the intermembrane space (IMS) are transferred via the dinuclear copper A center (CU(A)) of subunit 2 and heme A of subunit 1 to the active site in subunit 1, a binuclear center (BNC) formed by heme A3 and copper B (CU(B)). The BNC reduces molecular oxygen to 2 water molecules using 4 electrons from cytochrome c in the IMS and 4 protons from the mitochondrial matrix. The protein is Cytochrome c oxidase subunit 2 (MT-CO2) of Bos indicus (Zebu).